Consider the following 373-residue polypeptide: Leucine-, isoleucine-, valine-, threonine-, and alanine-binding protein (373 aa).

Positions 1-26 (MKKGTQRLSRLFAAMAIAGFASYSMA) are cleaved as a signal peptide. C80 and C105 are oxidised to a cystine.

It belongs to the leucine-binding protein family.

Its subcellular location is the periplasm. Functionally, component of the high-affinity leucine, isoleucine, valine transport system I (LIV-I), which is operative without Na(+) and is specific for alanine and threonine, in addition to branched-chain amino acids. Binds L-leucine, L-isoleucine, L-valine, L-threonine and L-alanine with nanomolar affinities. Can also bind L-homoserine with high affinity. This chain is Leucine-, isoleucine-, valine-, threonine-, and alanine-binding protein (braC), found in Pseudomonas aeruginosa (strain ATCC 15692 / DSM 22644 / CIP 104116 / JCM 14847 / LMG 12228 / 1C / PRS 101 / PAO1).